Consider the following 190-residue polypeptide: Protein GrpE (190 aa).

Residues 1-26 show a composition bias toward basic and acidic residues; that stretch reads MADKEKDAVIVDETEHVDVDSKESKK. The tract at residues 1–31 is disordered; sequence MADKEKDAVIVDETEHVDVDSKESKKEKKTK.

Belongs to the GrpE family. As to quaternary structure, homodimer.

The protein localises to the cytoplasm. In terms of biological role, participates actively in the response to hyperosmotic and heat shock by preventing the aggregation of stress-denatured proteins, in association with DnaK and GrpE. It is the nucleotide exchange factor for DnaK and may function as a thermosensor. Unfolded proteins bind initially to DnaJ; upon interaction with the DnaJ-bound protein, DnaK hydrolyzes its bound ATP, resulting in the formation of a stable complex. GrpE releases ADP from DnaK; ATP binding to DnaK triggers the release of the substrate protein, thus completing the reaction cycle. Several rounds of ATP-dependent interactions between DnaJ, DnaK and GrpE are required for fully efficient folding. The chain is Protein GrpE from Acholeplasma laidlawii (strain PG-8A).